A 205-amino-acid chain; its full sequence is Golgi to ER traffic protein 1 (205 aa).

Topologically, residues 1 to 9 are lumenal; it reads MFELQPSSI. Residues 10–29 form a helical membrane-spanning segment; the sequence is VVLVFCVLAIKVCISLIGKT. At 30-116 the chain is on the cytoplasmic side; the sequence is TIQDRIWYLY…QISKLVNLAI (87 aa). The stretch at 53-103 forms a coiled coil; that stretch reads ALAQKREELVRVNKERRAISAQDEYAKWTKLNRQFDKLNSEVNDLAEATSS. The helical transmembrane segment at 117 to 137 threads the bilayer; the sequence is AATTTAPIWFSRIWYRKVVLF. The Lumenal segment spans residues 138 to 161; that stretch reads YLPPKVFPYYIEWVLALPFIVTGG. A helical transmembrane segment spans residues 162-178; sequence VGLTVWMFALNSVLSSL. Residues 179-205 are Cytoplasmic-facing; sequence EFLIKFYLEEPVKKPEAPAASEAQTKQ.

This sequence belongs to the WRB/GET1 family. As to quaternary structure, component of the Golgi to ER traffic (GET) complex, which is composed of GET1, GET2 and GET3. Within the complex, GET1 and GET2 form a heterotetramer which is stabilized by phosphatidylinositol binding and which binds to the GET3 homodimer.

It localises to the endoplasmic reticulum membrane. It is found in the golgi apparatus membrane. In terms of biological role, required for the post-translational delivery of tail-anchored (TA) proteins to the endoplasmic reticulum. Together with GET2, acts as a membrane receptor for soluble GET3, which recognizes and selectively binds the transmembrane domain of TA proteins in the cytosol. The GET complex cooperates with the HDEL receptor ERD2 to mediate the ATP-dependent retrieval of resident ER proteins that contain a C-terminal H-D-E-L retention signal from the Golgi to the ER. In Clavispora lusitaniae (strain ATCC 42720) (Yeast), this protein is Golgi to ER traffic protein 1.